Consider the following 356-residue polypeptide: sn-glycerol-3-phosphate import ATP-binding protein UgpC (356 aa).

The 232-residue stretch at 4-235 (LKLQAVTKSW…PASRFVASFI (232 aa)) folds into the ABC transporter domain. ATP is bound at residue 37-44 (GPSGCGKS).

It belongs to the ABC transporter superfamily. sn-glycerol-3-phosphate importer (TC 3.A.1.1.3) family. In terms of assembly, the complex is composed of two ATP-binding proteins (UgpC), two transmembrane proteins (UgpA and UgpE) and a solute-binding protein (UgpB).

The protein resides in the cell inner membrane. The catalysed reaction is sn-glycerol 3-phosphate(out) + ATP + H2O = sn-glycerol 3-phosphate(in) + ADP + phosphate + H(+). Its function is as follows. Part of the ABC transporter complex UgpBAEC involved in sn-glycerol-3-phosphate (G3P) import. Responsible for energy coupling to the transport system. The sequence is that of sn-glycerol-3-phosphate import ATP-binding protein UgpC from Salmonella typhi.